Here is a 216-residue protein sequence, read N- to C-terminus: Cytidylate kinase (216 aa).

10–18 (GPAGAGKST) contributes to the ATP binding site.

It belongs to the cytidylate kinase family. Type 1 subfamily.

Its subcellular location is the cytoplasm. The enzyme catalyses CMP + ATP = CDP + ADP. It catalyses the reaction dCMP + ATP = dCDP + ADP. The polypeptide is Cytidylate kinase (Clostridioides difficile (strain 630) (Peptoclostridium difficile)).